The following is a 229-amino-acid chain: Orotidine 5'-phosphate decarboxylase (229 aa).

Substrate is bound by residues Asp-9, Lys-31, 58-67 (DLKLFDIPNT), Thr-121, Arg-179, Gln-188, Gly-208, and Arg-209. Catalysis depends on Lys-60, which acts as the Proton donor.

It belongs to the OMP decarboxylase family. Type 1 subfamily. Homodimer.

It catalyses the reaction orotidine 5'-phosphate + H(+) = UMP + CO2. It participates in pyrimidine metabolism; UMP biosynthesis via de novo pathway; UMP from orotate: step 2/2. In terms of biological role, catalyzes the decarboxylation of orotidine 5'-monophosphate (OMP) to uridine 5'-monophosphate (UMP). This chain is Orotidine 5'-phosphate decarboxylase, found in Lawsonia intracellularis (strain PHE/MN1-00).